A 141-amino-acid polypeptide reads, in one-letter code: Large ribosomal subunit protein uL11 (141 aa).

The disordered stretch occupies residues 1–23 (MAKQVTGQAKFQVPGGQATPAPP).

The protein belongs to the universal ribosomal protein uL11 family. As to quaternary structure, part of the ribosomal stalk of the 50S ribosomal subunit. Interacts with L10 and the large rRNA to form the base of the stalk. L10 forms an elongated spine to which L12 dimers bind in a sequential fashion forming a multimeric L10(L12)X complex. In terms of processing, one or more lysine residues are methylated.

Its function is as follows. Forms part of the ribosomal stalk which helps the ribosome interact with GTP-bound translation factors. This chain is Large ribosomal subunit protein uL11, found in Rhodopirellula baltica (strain DSM 10527 / NCIMB 13988 / SH1).